The primary structure comprises 698 residues: Elongation factor G (698 aa).

Positions 11–291 constitute a tr-type G domain; that stretch reads THFRNIGIAA…AVVDYLPSPL (281 aa). GTP contacts are provided by residues 20-27, 90-94, and 144-147; these read AHIDAGKT, DTPGH, and NKMD.

It belongs to the TRAFAC class translation factor GTPase superfamily. Classic translation factor GTPase family. EF-G/EF-2 subfamily.

Its subcellular location is the cytoplasm. In terms of biological role, catalyzes the GTP-dependent ribosomal translocation step during translation elongation. During this step, the ribosome changes from the pre-translocational (PRE) to the post-translocational (POST) state as the newly formed A-site-bound peptidyl-tRNA and P-site-bound deacylated tRNA move to the P and E sites, respectively. Catalyzes the coordinated movement of the two tRNA molecules, the mRNA and conformational changes in the ribosome. The chain is Elongation factor G from Deinococcus radiodurans (strain ATCC 13939 / DSM 20539 / JCM 16871 / CCUG 27074 / LMG 4051 / NBRC 15346 / NCIMB 9279 / VKM B-1422 / R1).